A 127-amino-acid chain; its full sequence is Holo-[acyl-carrier-protein] synthase (127 aa).

Residues aspartate 7 and glutamate 53 each coordinate Mg(2+).

This sequence belongs to the P-Pant transferase superfamily. AcpS family. Requires Mg(2+) as cofactor.

The protein localises to the cytoplasm. The catalysed reaction is apo-[ACP] + CoA = holo-[ACP] + adenosine 3',5'-bisphosphate + H(+). In terms of biological role, transfers the 4'-phosphopantetheine moiety from coenzyme A to a Ser of acyl-carrier-protein. The protein is Holo-[acyl-carrier-protein] synthase of Herpetosiphon aurantiacus (strain ATCC 23779 / DSM 785 / 114-95).